A 608-amino-acid chain; its full sequence is MAAPGLPQPGSLSTLAGYPSSTYSSQNSPFFPSADRGGRMTLEEIKRDFTKHKLECPDTMWREPQPEQVQGLYSFAIESIFGLTVNDVRIEEVTGDVRSCLPSIDSLQFLSQDGRLHAKAIGNLRFIRLCQRLNRVLGLPEFSRETFASPTASGVQRFASAVCMLLRLRESLCRQFESQIQQRASLQQSLQKLSQNAQLVEQELLRFRAERQTQQPLAQRQKQQQSELEEELRQRHSELGALMEEFKERQAVHGRLELELGDLVLELMNLKQEREELHDQVVHSPEKLMERRDELRVQQKHLDAQLQELENLAASQQKLLLAFAKAVKKAKKAMEILSAHRDQVLAPHLGFRSDMRTREKLFRELGEQKEQLSKAVQDLQAEREELARQLEDQERKKDEEETELRGHLARAKREVEERKKALADQQDMTAAFLREAEKLEEKLAEQKQRHKLLVDAIEEEIQKVYAAFLTYVSQMQFIRSQMPLSLDLSQSASFLAEHSEKTHRGSPLACEREENDDFLASLLAESSPSSLGEEKENLPQSRPTAAADAERRLADFSPEKGRKRLSCLDEETEEEARMHERERESDRLFPAAREPREDGDFPMYGHAE.

Residues I121–R125 are required for nuclear localization and function. Coiled coils occupy residues F176–L319 and R358–E460.

Belongs to the NUF2 family.

The protein localises to the chromosome. The protein resides in the centromere. It localises to the kinetochore. Its function is as follows. Required for anchoring centrosomal cores to the nuclear periphery. Plays a role in chromosome segregation but is dispensable for centromere clustering. This chain is Kinetochore protein NUF2, found in Toxoplasma gondii (strain ATCC 50611 / Me49).